The primary structure comprises 606 residues: NADH-ubiquinone oxidoreductase chain 5 (606 aa).

Transmembrane regions (helical) follow at residues 1-21 (MNLF…PIMV), 35-55 (YVKN…MMYL), 87-107 (LMFM…SMWY), 114-134 (INQF…LVTA), 140-160 (LFIG…WWFG), 171-191 (AILY…WFLS), 211-233 (FPLM…HPWL), 241-261 (TPVS…FLLV), 272-292 (LIQT…AICA), 301-320 (IIAF…IGLN), 325-347 (AFLH…GSII), 366-386 (LPFT…MPFL), 413-433 (LTAT…ALLG), 457-477 (LLIG…PVIT), 482-502 (MPLH…IIAF), and 582-602 (GLIK…MILF).

The protein belongs to the complex I subunit 5 family. In terms of assembly, core subunit of respiratory chain NADH dehydrogenase (Complex I) which is composed of 45 different subunits.

It localises to the mitochondrion inner membrane. The enzyme catalyses a ubiquinone + NADH + 5 H(+)(in) = a ubiquinol + NAD(+) + 4 H(+)(out). Its function is as follows. Core subunit of the mitochondrial membrane respiratory chain NADH dehydrogenase (Complex I) which catalyzes electron transfer from NADH through the respiratory chain, using ubiquinone as an electron acceptor. Essential for the catalytic activity and assembly of complex I. This Balaenoptera musculus (Blue whale) protein is NADH-ubiquinone oxidoreductase chain 5 (MT-ND5).